The sequence spans 301 residues: Tyrosine recombinase XerD (301 aa).

In terms of domain architecture, Core-binding (CB) spans 7–90; it reads QFHTTILEQF…ALKVFFLFLK (84 aa). The 186-residue stretch at 109 to 294 folds into the Tyr recombinase domain; sequence RLPSVLTPQE…AADSLIEKFL (186 aa). Residues Arg153, Lys175, His246, Arg249, and His272 contribute to the active site. Residue Tyr281 is the O-(3'-phospho-DNA)-tyrosine intermediate of the active site.

This sequence belongs to the 'phage' integrase family. XerD subfamily. Forms a cyclic heterotetrameric complex composed of two molecules of XerC and two molecules of XerD.

The protein localises to the cytoplasm. In terms of biological role, site-specific tyrosine recombinase, which acts by catalyzing the cutting and rejoining of the recombining DNA molecules. The XerC-XerD complex is essential to convert dimers of the bacterial chromosome into monomers to permit their segregation at cell division. It also contributes to the segregational stability of plasmids. The polypeptide is Tyrosine recombinase XerD (Chlamydia pneumoniae (Chlamydophila pneumoniae)).